A 119-amino-acid chain; its full sequence is Large ribosomal subunit protein uL18 (119 aa).

Belongs to the universal ribosomal protein uL18 family. Part of the 50S ribosomal subunit; part of the 5S rRNA/L5/L18/L25 subcomplex. Contacts the 5S and 23S rRNAs.

Functionally, this is one of the proteins that bind and probably mediate the attachment of the 5S RNA into the large ribosomal subunit, where it forms part of the central protuberance. This Xanthomonas axonopodis pv. citri (strain 306) protein is Large ribosomal subunit protein uL18.